Consider the following 918-residue polypeptide: UPF0182 protein CPF_0011 (918 aa).

The next 7 membrane-spanning stretches (helical) occupy residues 8–28 (TVLI…NFII), 46–66 (LIAI…VIAI), 91–111 (FLLS…TTQW), 151–171 (AISL…ALGF), 200–220 (LAVL…LKSY), 243–263 (IFYK…FISI), and 271–291 (IIIS…VAIF). Residues 857 to 869 (EENKNSNKDETPK) are compositionally biased toward basic and acidic residues. The disordered stretch occupies residues 857–876 (EENKNSNKDETPKNEITSDN).

It belongs to the UPF0182 family.

It is found in the cell membrane. This Clostridium perfringens (strain ATCC 13124 / DSM 756 / JCM 1290 / NCIMB 6125 / NCTC 8237 / Type A) protein is UPF0182 protein CPF_0011.